We begin with the raw amino-acid sequence, 329 residues long: Pantothenate kinase (329 aa).

The interval 1-21 (MISPVPSIPRSAHRQRPEATP) is disordered. 107-114 (GSVAVGKS) provides a ligand contact to ATP.

This sequence belongs to the prokaryotic pantothenate kinase family.

It is found in the cytoplasm. It carries out the reaction (R)-pantothenate + ATP = (R)-4'-phosphopantothenate + ADP + H(+). It participates in cofactor biosynthesis; coenzyme A biosynthesis; CoA from (R)-pantothenate: step 1/5. The sequence is that of Pantothenate kinase (coaA) from Streptomyces coelicolor (strain ATCC BAA-471 / A3(2) / M145).